The following is a 156-amino-acid chain: Putative HTH-type transcriptional regulator YwgB (156 aa).

Residues 2–133 (KMKSGMEQAV…REESLQHVMD (132 aa)) enclose the HTH rrf2-type domain.

In Bacillus subtilis (strain 168), this protein is Putative HTH-type transcriptional regulator YwgB (ywgB).